We begin with the raw amino-acid sequence, 453 residues long: Cholesterol 7-desaturase nvd (453 aa).

Residues 53–73 form a helical membrane-spanning segment; that stretch reads IVEYILILTLMFAFSAILYVI. The Rieske domain occupies 126–229; it reads WFAVAETREL…VVETDGAIWI (104 aa). Residues cysteine 167, histidine 169, cysteine 187, and histidine 190 each coordinate [2Fe-2S] cluster.

The protein belongs to the cholesterol 7-desaturase family. The cofactor is [2Fe-2S] cluster.

The protein localises to the membrane. It catalyses the reaction cholesterol + NADPH + O2 + H(+) = 7-dehydrocholesterol + NADP(+) + 2 H2O. It carries out the reaction cholesterol + NADH + O2 + H(+) = 7-dehydrocholesterol + NAD(+) + 2 H2O. The protein operates within steroid hormone biosynthesis; dafachronic acid biosynthesis. Functionally, catalyzes the production of 7-dehydrocholesterol (7-DHC or cholesta-5,7-dien-3beta-ol) by inserting a double bond (desaturating) at the C7-C8 single bond of cholesterol. Essential regulator of steroid biosynthesis as this reaction is the first step in the synthesis of the steroid hormone Delta(7)-dafachronic acid. This Bombyx mori (Silk moth) protein is Cholesterol 7-desaturase nvd.